Reading from the N-terminus, the 442-residue chain is tRNA modification GTPase MnmE (442 aa).

Positions 23, 82, and 121 each coordinate (6S)-5-formyl-5,6,7,8-tetrahydrofolate. Residues 217-363 (PFKIAIIGET…LVDLLTKYIN (147 aa)) form the TrmE-type G domain. N227 is a K(+) binding site. GTP is bound by residues 227 to 232 (NVGKSS), 246 to 252 (SNIKGST), and 271 to 274 (DTAG). S231 lines the Mg(2+) pocket. Residues S246, I248, and S251 each contribute to the K(+) site. T252 is a binding site for Mg(2+). K442 serves as a coordination point for (6S)-5-formyl-5,6,7,8-tetrahydrofolate.

This sequence belongs to the TRAFAC class TrmE-Era-EngA-EngB-Septin-like GTPase superfamily. TrmE GTPase family. Homodimer. Heterotetramer of two MnmE and two MnmG subunits. K(+) serves as cofactor.

It is found in the cytoplasm. Exhibits a very high intrinsic GTPase hydrolysis rate. Involved in the addition of a carboxymethylaminomethyl (cmnm) group at the wobble position (U34) of certain tRNAs, forming tRNA-cmnm(5)s(2)U34. This chain is tRNA modification GTPase MnmE, found in Mycoplasma genitalium (strain ATCC 33530 / DSM 19775 / NCTC 10195 / G37) (Mycoplasmoides genitalium).